A 362-amino-acid polypeptide reads, in one-letter code: Beta-ketoacyl-[acyl-carrier-protein] synthase III 2 (362 aa).

Residues cysteine 113 and histidine 251 contribute to the active site. Residues 252–256 (QANIR) are ACP-binding. Asparagine 281 is an active-site residue.

It belongs to the thiolase-like superfamily. FabH family. As to quaternary structure, homodimer.

It localises to the cytoplasm. The catalysed reaction is malonyl-[ACP] + acetyl-CoA + H(+) = 3-oxobutanoyl-[ACP] + CO2 + CoA. Its pathway is lipid metabolism; fatty acid biosynthesis. Catalyzes the condensation reaction of fatty acid synthesis by the addition to an acyl acceptor of two carbons from malonyl-ACP. Catalyzes the first condensation reaction which initiates fatty acid synthesis and may therefore play a role in governing the total rate of fatty acid production. Possesses both acetoacetyl-ACP synthase and acetyl transacylase activities. Its substrate specificity determines the biosynthesis of branched-chain and/or straight-chain of fatty acids. This is Beta-ketoacyl-[acyl-carrier-protein] synthase III 2 from Vibrio vulnificus (strain CMCP6).